The sequence spans 303 residues: Coenzyme PQQ synthesis protein B (303 aa).

Belongs to the PqqB family.

It functions in the pathway cofactor biosynthesis; pyrroloquinoline quinone biosynthesis. Its function is as follows. May be involved in the transport of PQQ or its precursor to the periplasm. This Pseudomonas fluorescens (strain SBW25) protein is Coenzyme PQQ synthesis protein B.